Here is a 379-residue protein sequence, read N- to C-terminus: Cytochrome b (379 aa).

The next 4 helical transmembrane spans lie at 33 to 53, 77 to 98, 113 to 133, and 178 to 198; these read FGSL…FLAM, WLIR…FIHV, WNIG…GYVL, and FFAF…VHLL. Heme b contacts are provided by His83 and His97. Heme b-binding residues include His182 and His196. His201 is a binding site for a ubiquinone. Helical transmembrane passes span 226 to 246, 288 to 308, 320 to 340, and 347 to 367; these read TKDL…ALFF, LGGV…PLLN, ITQV…WIGG, and XTMI…ILIP.

The protein belongs to the cytochrome b family. The cytochrome bc1 complex contains 11 subunits: 3 respiratory subunits (MT-CYB, CYC1 and UQCRFS1), 2 core proteins (UQCRC1 and UQCRC2) and 6 low-molecular weight proteins (UQCRH/QCR6, UQCRB/QCR7, UQCRQ/QCR8, UQCR10/QCR9, UQCR11/QCR10 and a cleavage product of UQCRFS1). This cytochrome bc1 complex then forms a dimer. Heme b is required as a cofactor.

Its subcellular location is the mitochondrion inner membrane. Its function is as follows. Component of the ubiquinol-cytochrome c reductase complex (complex III or cytochrome b-c1 complex) that is part of the mitochondrial respiratory chain. The b-c1 complex mediates electron transfer from ubiquinol to cytochrome c. Contributes to the generation of a proton gradient across the mitochondrial membrane that is then used for ATP synthesis. This Akodon boliviensis (Bolivian grass mouse) protein is Cytochrome b (MT-CYB).